The sequence spans 268 residues: Magnesium dechelatase SGR1, chloroplastic (268 aa).

The transit peptide at 1-48 (MCSLSAIMLLPTKLKPAYSDKRSNSSSSSSLFFNNRRSKKKNQSIVPV) directs the protein to the chloroplast.

The protein belongs to the staygreen family. In terms of assembly, interacts with HCAR, the chlorophyll catabolic enzymes (CCEs) NYC1, PAO and RCCR, and the LHCII complex. Part of a SGR1-CCE-LHCII complex, which acts in chlorophyll breakdown. As to expression, expressed in roots, leaves, seeds, flowers, buds, petals, sepals and siliques.

Its subcellular location is the plastid. It localises to the chloroplast thylakoid membrane. The enzyme catalyses chlorophyll a + 2 H(+) = pheophytin a + Mg(2+). Magnesium chelatase involved in chlorophyll a degradation in the chlorophyll-protein complexes of photosystem I (PSI) and photosystem II (PSII). Contributes to the degradation of PSI and PSII in the thylakoid membranes. Required to trigger chlorophyll degradation during natural and dark-induced leaf senescence. Mediates chlorophyll degradation during embryo degreening. Recombinant SGR1 possesses high dechelating activity against chlorophyll a, very low activity against chlorophyllide a, and no activity against chlorophyll b. Magnesium dechelation of chlorophyll a by SGR1 activates chlorophyll b degradation by inducing the expression of NYC1, an enzyme involved in chlorophyll b degradation. This Arabidopsis thaliana (Mouse-ear cress) protein is Magnesium dechelatase SGR1, chloroplastic.